A 315-amino-acid polypeptide reads, in one-letter code: Acetyl-coenzyme A carboxylase carboxyl transferase subunit alpha (315 aa).

Residues 39 to 293 (RLQDKSSTLT…RADLIEQLDM (255 aa)) enclose the CoA carboxyltransferase C-terminal domain.

Belongs to the AccA family. Acetyl-CoA carboxylase is a heterohexamer composed of biotin carboxyl carrier protein (AccB), biotin carboxylase (AccC) and two subunits each of ACCase subunit alpha (AccA) and ACCase subunit beta (AccD).

The protein localises to the cytoplasm. It catalyses the reaction N(6)-carboxybiotinyl-L-lysyl-[protein] + acetyl-CoA = N(6)-biotinyl-L-lysyl-[protein] + malonyl-CoA. The protein operates within lipid metabolism; malonyl-CoA biosynthesis; malonyl-CoA from acetyl-CoA: step 1/1. Component of the acetyl coenzyme A carboxylase (ACC) complex. First, biotin carboxylase catalyzes the carboxylation of biotin on its carrier protein (BCCP) and then the CO(2) group is transferred by the carboxyltransferase to acetyl-CoA to form malonyl-CoA. The chain is Acetyl-coenzyme A carboxylase carboxyl transferase subunit alpha from Pseudomonas entomophila (strain L48).